A 426-amino-acid chain; its full sequence is Glutamate-1-semialdehyde 2,1-aminomutase (426 aa).

The residue at position 265 (Lys-265) is an N6-(pyridoxal phosphate)lysine.

This sequence belongs to the class-III pyridoxal-phosphate-dependent aminotransferase family. HemL subfamily. Homodimer. It depends on pyridoxal 5'-phosphate as a cofactor.

Its subcellular location is the cytoplasm. It catalyses the reaction (S)-4-amino-5-oxopentanoate = 5-aminolevulinate. It participates in porphyrin-containing compound metabolism; protoporphyrin-IX biosynthesis; 5-aminolevulinate from L-glutamyl-tRNA(Glu): step 2/2. This Salmonella paratyphi A (strain ATCC 9150 / SARB42) protein is Glutamate-1-semialdehyde 2,1-aminomutase.